A 216-amino-acid chain; its full sequence is Octanoyltransferase (216 aa).

One can recognise a BPL/LPL catalytic domain in the interval Ser31–Gln205. Residues Arg70–His77, Ser137–Gly139, and Gly150–Ala152 contribute to the substrate site. Catalysis depends on Cys168, which acts as the Acyl-thioester intermediate.

It belongs to the LipB family.

The protein localises to the cytoplasm. It catalyses the reaction octanoyl-[ACP] + L-lysyl-[protein] = N(6)-octanoyl-L-lysyl-[protein] + holo-[ACP] + H(+). Its pathway is protein modification; protein lipoylation via endogenous pathway; protein N(6)-(lipoyl)lysine from octanoyl-[acyl-carrier-protein]: step 1/2. In terms of biological role, catalyzes the transfer of endogenously produced octanoic acid from octanoyl-acyl-carrier-protein onto the lipoyl domains of lipoate-dependent enzymes. Lipoyl-ACP can also act as a substrate although octanoyl-ACP is likely to be the physiological substrate. This is Octanoyltransferase from Vibrio cholerae serotype O1 (strain ATCC 39315 / El Tor Inaba N16961).